Consider the following 888-residue polypeptide: MINYTSTFTLNRQKYHYIDLVKASKDYDIELDSLPYTIKILLESLLRKHDDICVTKNNIETLFHYNSKAPQGEVPFKPSRVILQDFTGVPVVVDLASMRDAVVENGGSPDLINPEIPVDLVIDHSVQVDFFGNQDAFDANIDLEFERNNERYEFLKWAEKTFENYRAVPPATGIIHQVNLEFLSDVIINKDGFLYPDSMFGTDSHTTMINGIGVLGWGVGGIEAEAAMLGEASYFPIPEVIGVRLYGELPKVATATDLALKVTQKLRLENVVGKFVEFFGPGLAGLSLADRATVANMAPEYGATCGYFPIDDETLNYMKLTNRSAEHIALTKEYAKRNHLYHDMTNLPSYTKIVEIDLSAIKPSISGPKRPQDLIELGQAKEEFQASLVRQFGVRGFGLGADELAKKATVHFDDGQELEVKTGHVAIAAITSCTNTSNPYVLLSAGLLAKKAVERGLSVAKTVKTSLAPGSKVVTAYLRKSGLQPYLDKLGFNLVGYGCTTCIGNSGDLVPEVAKAVQEKDLLVSAVLSGNRNFEGRVNPLVKANFLASPPLVVAYALAGTTNIDLTSKPLGYDKNGQAVYLEDIMPAKEEVLSYIEQFVTAELFEEEYGHVFSDSQKWNQIETENSKNYQWNQVSTYIQNPPYFENLTNTENKIDLSALKVLAKFGDSVTTDHISPAGNIARNSPAARYLEENGVTYAEFNSYGSRRGNHEVMMRGTFANIRIKNELADGKIGGYTKYEGEILPIYEAAMNYKKNGVSTIVIAGKDYGMGSSRDWAAKGANLLGVKVVLAESFERIHRSNLVMMGILPLQFLDGQTAESLQLTGYETYTVELPEQPQVHDIVKVKATSKEGTKEFQVLLRFDADADIRYYQNGGILPMVVRKKLNGG.

Residues Cys433, Cys499, and Cys502 each coordinate [4Fe-4S] cluster.

Belongs to the aconitase/IPM isomerase family. As to quaternary structure, monomer. The cofactor is [4Fe-4S] cluster.

The enzyme catalyses citrate = D-threo-isocitrate. It catalyses the reaction (2S,3R)-3-hydroxybutane-1,2,3-tricarboxylate = 2-methyl-cis-aconitate + H2O. It functions in the pathway carbohydrate metabolism; tricarboxylic acid cycle; isocitrate from oxaloacetate: step 2/2. Its pathway is organic acid metabolism; propanoate degradation. Its function is as follows. Involved in the catabolism of short chain fatty acids (SCFA) via the tricarboxylic acid (TCA)(acetyl degradation route) and probably the 2-methylcitrate cycle I (propionate degradation route). Catalyzes the reversible isomerization of citrate to isocitrate via cis-aconitate. Could catalyze the hydration of 2-methyl-cis-aconitate to yield (2R,3S)-2-methylisocitrate. The apo form of AcnA functions as a RNA-binding regulatory protein. This Streptococcus mutans serotype c (strain ATCC 700610 / UA159) protein is Aconitate hydratase A (acn).